Reading from the N-terminus, the 390-residue chain is Transforming growth factor beta-1 proprotein (390 aa).

A signal peptide spans 1-29 (MPPSGLRLLPLLLPLLWLLVLTPGRPAAG). A straightjacket domain region spans residues 30-74 (LSTCKTIDMELVKRKRIEAIRGQILSKLRLASPPSQGEVPPGPLP). The interval 75 to 271 (EAVLALYNST…ATPLERAQQL (197 aa)) is arm domain. Residues N82, N136, and N176 are each glycosylated (N-linked (GlcNAc...) asparagine). The segment at 226-252 (DSKDNTLRVGINGFSSSRRGDLATIDG) is bowtie tail. Residues 244–246 (RGD) carry the Cell attachment site motif. 4 disulfide bridges follow: C285–C294, C293–C356, C322–C387, and C326–C389.

The protein belongs to the TGF-beta family. Homodimer; disulfide-linked. Interacts with the serine proteases, HTRA1 and HTRA3: the interaction with either inhibits TGFB1-mediated signaling and the HTRA protease activity is required for this inhibition. May interact with THSD4; this interaction may lead to sequestration by FBN1 microfibril assembly and attenuation of TGFB signaling. Interacts with CD109, DPT and ASPN. Interacts with EFEMP2. Interacts with TSKU; the interaction contributes to regulation of the hair cycle. Interacts with TGFBR3. In terms of assembly, homodimer; disulfide-linked. Interacts with transforming growth factor beta-1 (TGF-beta-1) chain; interaction is non-covalent and maintains TGF-beta-1 in a latent state; each latency-associated peptide (LAP) monomer interacts with TGF-beta-1 in the other monomer. Interacts with LTBP1; leading to regulation of TGF-beta-1 activation. Interacts with LRRC32/GARP; leading to regulation of TGF-beta-1 activation on the surface of activated regulatory T-cells (Tregs). Interacts with LRRC33/NRROS; leading to regulation of TGF-beta-1 activation in macrophages and microglia. Interacts (via cell attachment site) with integrins ITGAV and ITGB6 (ITGAV:ITGB6), leading to release of the active TGF-beta-1. Latency-associated peptide: Interacts with NREP; the interaction results in a decrease in TGFB1 autoinduction. Interacts with HSP90AB1; inhibits latent TGFB1 activation. As to quaternary structure, homodimer; disulfide-linked. Interacts with TGF-beta receptors (TGFBR1 and TGFBR2), leading to signal transduction. Transforming growth factor beta-1 proprotein: The precursor proprotein is cleaved in the Golgi apparatus by FURIN to form Transforming growth factor beta-1 (TGF-beta-1) and Latency-associated peptide (LAP) chains, which remain non-covalently linked, rendering TGF-beta-1 inactive. In terms of processing, N-glycosylated. Deglycosylation leads to activation of Transforming growth factor beta-1 (TGF-beta-1); mechanisms triggering deglycosylation-driven activation of TGF-beta-1 are however unclear.

Its subcellular location is the secreted. It localises to the extracellular space. The protein resides in the extracellular matrix. Transforming growth factor beta-1 proprotein: Precursor of the Latency-associated peptide (LAP) and Transforming growth factor beta-1 (TGF-beta-1) chains, which constitute the regulatory and active subunit of TGF-beta-1, respectively. In terms of biological role, required to maintain the Transforming growth factor beta-1 (TGF-beta-1) chain in a latent state during storage in extracellular matrix. Associates non-covalently with TGF-beta-1 and regulates its activation via interaction with 'milieu molecules', such as LTBP1, LRRC32/GARP and LRRC33/NRROS, that control activation of TGF-beta-1. Interaction with LRRC33/NRROS regulates activation of TGF-beta-1 in macrophages and microglia. Interaction with LRRC32/GARP controls activation of TGF-beta-1 on the surface of activated regulatory T-cells (Tregs). Interaction with integrins (ITGAV:ITGB6 or ITGAV:ITGB8) results in distortion of the Latency-associated peptide chain and subsequent release of the active TGF-beta-1. Functionally, multifunctional protein that regulates the growth and differentiation of various cell types and is involved in various processes, such as normal development, immune function, microglia function and responses to neurodegeneration. Activation into mature form follows different steps: following cleavage of the proprotein in the Golgi apparatus, Latency-associated peptide (LAP) and Transforming growth factor beta-1 (TGF-beta-1) chains remain non-covalently linked rendering TGF-beta-1 inactive during storage in extracellular matrix. At the same time, LAP chain interacts with 'milieu molecules', such as LTBP1, LRRC32/GARP and LRRC33/NRROS that control activation of TGF-beta-1 and maintain it in a latent state during storage in extracellular milieus. TGF-beta-1 is released from LAP by integrins (ITGAV:ITGB6 or ITGAV:ITGB8): integrin-binding to LAP stabilizes an alternative conformation of the LAP bowtie tail and results in distortion of the LAP chain and subsequent release of the active TGF-beta-1. Once activated following release of LAP, TGF-beta-1 acts by binding to TGF-beta receptors (TGFBR1 and TGFBR2), which transduce signal. While expressed by many cells types, TGF-beta-1 only has a very localized range of action within cell environment thanks to fine regulation of its activation by Latency-associated peptide chain (LAP) and 'milieu molecules'. Plays an important role in bone remodeling: acts as a potent stimulator of osteoblastic bone formation, causing chemotaxis, proliferation and differentiation in committed osteoblasts. Can promote either T-helper 17 cells (Th17) or regulatory T-cells (Treg) lineage differentiation in a concentration-dependent manner. At high concentrations, leads to FOXP3-mediated suppression of RORC and down-regulation of IL-17 expression, favoring Treg cell development. At low concentrations in concert with IL-6 and IL-21, leads to expression of the IL-17 and IL-23 receptors, favoring differentiation to Th17 cells. Stimulates sustained production of collagen through the activation of CREB3L1 by regulated intramembrane proteolysis (RIP). Mediates SMAD2/3 activation by inducing its phosphorylation and subsequent translocation to the nucleus. Positively regulates odontoblastic differentiation in dental papilla cells, via promotion of IPO7-mediated translocation of phosphorylated SMAD2 to the nucleus and subsequent transcription of target genes. Can induce epithelial-to-mesenchymal transition (EMT) and cell migration in various cell types. The protein is Transforming growth factor beta-1 proprotein (TGFB1) of Equus caballus (Horse).